The sequence spans 1276 residues: cGMP-specific 3',5'-cyclic phosphodiesterase (1276 aa).

Disordered stretches follow at residues 1 to 76 (MHEL…TAAG), 91 to 185 (NQVK…QQDV), and 241 to 260 (ASPTVQQKSPRSLSNSSASS). 2 stretches are compositionally biased toward low complexity: residues 12–47 (SSSSSSSSSSNMTDVSAAAGGATAPAETAATSSSAS) and 57–76 (TSTAMAAPTTTPTTAATAAG). Positions 109 to 124 (APYPPVPAAKPKPTPT) are enriched in pro residues. The span at 129–140 (SKFKSTSREVDV) shows a compositional bias: basic and acidic residues. A compositionally biased stretch (polar residues) spans 147–166 (ARSSTISPGVSIHTQTIQQE). 2 stretches are compositionally biased toward low complexity: residues 167 to 180 (SSSAKPGMSSSSSS) and 249 to 260 (SPRSLSNSSASS). GAF domains lie at 290-442 (DIDV…GIGI) and 474-658 (NLEC…GLGI). Residues 688–1119 (SQDQTEKLTQ…RNWQDLAEKV (432 aa)) form the PDEase domain. His764 acts as the Proton donor in catalysis. A divalent metal cation contacts are provided by His768, His804, Asp805, and Asp1023. Disordered stretches follow at residues 1162–1193 (AQHGAGAGGDDSHTPEHQRSGSRLSMKKTGAL) and 1205–1276 (LYNS…CSLL). Composition is skewed to basic and acidic residues over residues 1171-1180 (DDSHTPEHQR) and 1221-1233 (LESHVSEDMDDKS). Low complexity predominate over residues 1248–1263 (GRMSASSSTSSAGTVV). The span at 1266 to 1276 (SKKRSKLCSLL) shows a compositional bias: basic residues. Cys1273 carries the post-translational modification Cysteine methyl ester. The S-farnesyl cysteine moiety is linked to residue Cys1273. The propeptide at 1274 to 1276 (SLL) is removed in mature form.

It belongs to the cyclic nucleotide phosphodiesterase family. Interacts with PrBP. Requires a divalent metal cation as cofactor.

It localises to the cell membrane. It carries out the reaction 3',5'-cyclic GMP + H2O = GMP + H(+). Functionally, has a role regulating cGMP transport in Malpighian tubule principal cells. The chain is cGMP-specific 3',5'-cyclic phosphodiesterase from Drosophila persimilis (Fruit fly).